Reading from the N-terminus, the 116-residue chain is Small ribosomal subunit protein uS13m (116 aa).

The protein belongs to the universal ribosomal protein uS13 family. Part of the small ribosomal subunit.

The protein resides in the mitochondrion. Its function is as follows. Located at the top of the head of the small subunit, it contacts several helices of the 18S rRNA. This is Small ribosomal subunit protein uS13m (RPS13) from Nicotiana tabacum (Common tobacco).